A 424-amino-acid chain; its full sequence is Histidine--tRNA ligase (424 aa).

It belongs to the class-II aminoacyl-tRNA synthetase family. In terms of assembly, homodimer.

The protein localises to the cytoplasm. The catalysed reaction is tRNA(His) + L-histidine + ATP = L-histidyl-tRNA(His) + AMP + diphosphate + H(+). This Escherichia coli O139:H28 (strain E24377A / ETEC) protein is Histidine--tRNA ligase.